A 283-amino-acid polypeptide reads, in one-letter code: Glutamyl-Q tRNA(Asp) synthetase (283 aa).

Residues 5–9 (RFAPT) and glutamate 41 contribute to the L-glutamate site. The 'HIGH' region motif lies at 8 to 18 (PTPSGPLHLGS). The Zn(2+) site is built by cysteine 97, cysteine 99, tyrosine 111, and cysteine 115. Positions 168 and 186 each coordinate L-glutamate. Positions 224–228 (KLSKQ) match the 'KMSKS' region motif. Lysine 227 serves as a coordination point for ATP.

This sequence belongs to the class-I aminoacyl-tRNA synthetase family. GluQ subfamily. Zn(2+) is required as a cofactor.

In terms of biological role, catalyzes the tRNA-independent activation of glutamate in presence of ATP and the subsequent transfer of glutamate onto a tRNA(Asp). Glutamate is transferred on the 2-amino-5-(4,5-dihydroxy-2-cyclopenten-1-yl) moiety of the queuosine in the wobble position of the QUC anticodon. The protein is Glutamyl-Q tRNA(Asp) synthetase of Idiomarina loihiensis (strain ATCC BAA-735 / DSM 15497 / L2-TR).